The following is a 239-amino-acid chain: Lipid transferase CIDEC (239 aa).

The tract at residues 1–35 is required for liquid-liquid phase separation (LLPS); that stretch reads MDYAMKSLSLLYPRSLSRHVAVSTAVVTQQLVSKP. The CIDE-N domain occupies 41–118; the sequence is RARPCRVSTA…VLLKGQKWKP (78 aa). Positions 123-126 match the RKKR polybasic motif motif; it reads RKKR.

The protein belongs to the CIDE family. As to quaternary structure, homodimer. Homooligomer; undergoes liquid-liquid phase separation (LLPS) via its N-terminus, facilitating lipid droplet fusion, occurs at the lipid droplet contact sites. Interacts with CIDEA. Interacts with PLIN1. Interacts with NFAT5; this interaction is direct and retains NFAT5 in the cytoplasm. Interacts with CEBPB. Interacts with isoform CLSTN3beta of CLSTN3; inhibiting the lipid transferase activity of CIDEC. In terms of processing, ubiquitinated and targeted to proteasomal degradation, resulting in a short half-life (about 15 minutes in 3T3-L1 cells). Protein stability depends on triaclyglycerol synthesis, fatty acid availability and lipid droplet formation. In terms of tissue distribution, expressed almost exclusively in adipose tissue, including subcutaneous and epididymal white adipose tissue (at protein level). Although abundantly present in brown adipose tissue at the mRNA level, the protein is almost undetectable in this tissue, or at moderate levels. Expressed in the mammary gland, in stromal adipose tissue, but becomes undetectable at the end of pregnancy and during lactation (at protein level). Expressed at low levels in skeletal muscle and heart.

The protein resides in the lipid droplet. The protein localises to the endoplasmic reticulum. It is found in the nucleus. The enzyme catalyses a triacyl-sn-glycerol(in) = a triacyl-sn-glycerol(out). Functionally, lipid transferase specifically expressed in white adipose tissue, which promotes unilocular lipid droplet formation by mediating lipid droplet fusion. Lipid droplet fusion promotes their enlargement, restricting lipolysis and favoring lipid storage. Localizes on the lipid droplet surface, at focal contact sites between lipid droplets, and mediates atypical lipid droplet fusion by undergoing liquid-liquid phase separation (LLPS) and promoting directional net neutral lipid transfer from the smaller to larger lipid droplets. The transfer direction may be driven by the internal pressure difference between the contacting lipid droplet pair. Its role in neutral lipid transfer and lipid droplet enlargement is activated by the interaction with PLIN1. May also act as a CEBPB coactivator in the white adipose tissue to control the expression of a subset of CEBPB downstream target genes, including SOCS1, SOCS3, TGFB1, TGFBR1, ID2 and XDH. When overexpressed in preadipocytes, induces apoptosis or increases cell susceptibility to apoptosis induced by serum deprivation or TGFB treatment. This Mus musculus (Mouse) protein is Lipid transferase CIDEC.